The following is a 165-amino-acid chain: UPF0262 protein blr1257 (165 aa).

The protein belongs to the UPF0262 family.

This is UPF0262 protein blr1257 from Bradyrhizobium diazoefficiens (strain JCM 10833 / BCRC 13528 / IAM 13628 / NBRC 14792 / USDA 110).